The chain runs to 919 residues: MFRKARRVNVRKRNDSEEEERERDEEQEPPPLLPPPASGEEPGPGGGDRAPAGESLLGPGPLPPPPSAHHPGLGAEAGGGISGGAEPGNGLKPRKRPRENKEVPRASLLSFQDEEEENEEVFKVKKSSYSKKIVKLLKKEYKEDLEKSKIKTELNTAADSDQPLDKTCHAKDTNPEDGVVISEHGEDEMDMESEKEEEKPKAGGAFSNALSSLNVLRPGEIPDAAFIHAARKKRQLARELGDFTPHDSEPGKGRLVREDENDASDDEDDDEKRRIVFSVKEKSQRQKIAEEIGIEGSDDDALVTGEQDEELSRWEQEQIRKGINIPQVQASQPSEVNVYYQNTYQTMPYGASYGIPYSYTAYGSSDAKSQKTDNTVPFKTPSNEMAPVTIDLVKRQLKDRLDSMKELHKTNQQQHEKHLQSRVDSTRAIERLEGSSGGIGERYKFLQEMRGYVQDLLECFSEKVPLINELESAIHQLYKQRASRLVQRRQDDIKDESSEFSSHSNKALMAPNLDSFGRDRALYQEHAKRRIAEREARRTRRRQAREQTGQMADHLEGLSSDDEETSTDITNFNLEKDRILKESSKVFEDVLESFYSIDCIKAQFEAWRSKYYMSYKDAYIGLCLPKLFNPLIRLQLLTWTPLEAKCRDFETMLWFESLLFYGCEDREQEKDEADVALLPTIVEKVILPKLTVIAETMWDPFSTTQTSRMVGITMKLINGYPSVVNADNKNTQVYLKALLLRMRRTLDDDVFMPLYPKNVLENKNSGPYLFFQRQFWSSVKLLGNFLQWYGIFSNKTLQELSIDGLLNRYILMAFQNSEYGDDSIRKAQNVINCFPKQWFVNLKGERTISQLENFCRYLVHLADTIYRNSIGCSDVEKRNARENIKQIVKLLASVRALDHAISVASDHNVKEVKSLIEGK.

The span at methionine 1 to arginine 11 shows a compositional bias: basic residues. 3 disordered regions span residues methionine 1–glutamate 120, lysine 151–phenylalanine 206, and alanine 237–phenylalanine 277. Position 16 is a phosphoserine (serine 16). Acidic residues predominate over residues serine 16 to glutamate 28. The span at arginine 49–proline 59 shows a compositional bias: low complexity. The segment covering alanine 75–proline 87 has biased composition (gly residues). Lysine 151 participates in a covalent cross-link: Glycyl lysine isopeptide (Lys-Gly) (interchain with G-Cter in SUMO1); alternate. Lysine 151 is covalently cross-linked (Glycyl lysine isopeptide (Lys-Gly) (interchain with G-Cter in SUMO2); alternate). A Phosphoserine modification is found at serine 160. A compositionally biased stretch (basic and acidic residues) spans proline 163–asparagine 174. A compositionally biased stretch (acidic residues) spans glycine 185–lysine 195. Serine 193 is subject to Phosphoserine. The span at alanine 237–glutamate 258 shows a compositional bias: basic and acidic residues. Residues aspartate 259–aspartate 270 are compositionally biased toward acidic residues. 4 positions are modified to phosphoserine: serine 264, serine 297, serine 559, and serine 560. The segment at threonine 380–serine 560 is necessary and sufficient for interaction with PAX7. Positions glutamate 533–serine 566 are disordered. Residue threonine 565 is modified to Phosphothreonine.

The protein belongs to the GCF family. Interacts with PAX3 and PAX7. Interacts with WDR5; associates with a histone methyltransferase (HMT) complex composed at least of RBBP5, ASH2L, SET1, SET2 and KMT2A/MLL1, KMT2D/MLL2, KMT2C/MLL3 and KMT2B/MLL4 through direct interaction with WDR5. As to expression, ubiquitously expressed in all tissues tested including skeletal muscle. Expressed in primary myoblasts.

Its subcellular location is the nucleus. Functionally, adapter protein linking the transcription factors PAX3 and PAX7 to the histone methylation machinery and involved in myogenesis. Associates with a histone methyltransferase complex that specifically mediates dimethylation and trimethylation of 'Lys-4' of histone H3. Mediates the recruitment of that complex to the transcription factors PAX3 and PAX7 on chromatin to regulate the expression of genes involved in muscle progenitor cells proliferation including ID3 and CDC20. The chain is PAX3- and PAX7-binding protein 1 (Paxbp1) from Mus musculus (Mouse).